The primary structure comprises 147 residues: NADH-quinone oxidoreductase subunit A (147 aa).

A run of 3 helical transmembrane segments spans residues 16–36 (FAIF…GGWF), 68–88 (FYLV…LFAW), and 98–118 (VGFV…VYLV).

Belongs to the complex I subunit 3 family. As to quaternary structure, NDH-1 is composed of 13 different subunits. Subunits NuoA, H, J, K, L, M, N constitute the membrane sector of the complex.

Its subcellular location is the cell inner membrane. It carries out the reaction a quinone + NADH + 5 H(+)(in) = a quinol + NAD(+) + 4 H(+)(out). Its function is as follows. NDH-1 shuttles electrons from NADH, via FMN and iron-sulfur (Fe-S) centers, to quinones in the respiratory chain. The immediate electron acceptor for the enzyme in this species is believed to be ubiquinone. Couples the redox reaction to proton translocation (for every two electrons transferred, four hydrogen ions are translocated across the cytoplasmic membrane), and thus conserves the redox energy in a proton gradient. The polypeptide is NADH-quinone oxidoreductase subunit A (Shigella boydii serotype 18 (strain CDC 3083-94 / BS512)).